The sequence spans 232 residues: Thiamine import ATP-binding protein ThiQ (232 aa).

The ABC transporter domain occupies 2-230 (LKLTDITWLY…KASASAILGI (229 aa)). ATP is bound at residue 32-39 (GPSGAGKS).

It belongs to the ABC transporter superfamily. Thiamine importer (TC 3.A.1.19.1) family. As to quaternary structure, the complex is composed of two ATP-binding proteins (ThiQ), two transmembrane proteins (ThiP) and a solute-binding protein (ThiB).

The protein localises to the cell inner membrane. It carries out the reaction thiamine(out) + ATP + H2O = thiamine(in) + ADP + phosphate + H(+). In terms of biological role, part of the ABC transporter complex ThiBPQ involved in thiamine import. Responsible for energy coupling to the transport system. The polypeptide is Thiamine import ATP-binding protein ThiQ (Shigella flexneri serotype 5b (strain 8401)).